A 320-amino-acid polypeptide reads, in one-letter code: MKKVKLSLIANERSRKTSFMKRKNGIFKKLHELSTLCGVQACALIYSPFIPVPESWPSREGAKKVASKFLEMPRTARTRKMMDQETHLMERITKAKEQLKNLAAENRELQVRRFMFDCVEGKMSQYRYDAKDLQDLLSCMNLYLDQLNGRIESIKENGESLLSSVSPFPTRIGVDEIGDESFSDSPIHSTTRVVDTPNATNPHVLAGDMTPFLDADANANMNQVQYQAPNNLFNQIQREFYNINLNLNLNLNSNQYLNQQQSFMNPMVEQHMNHVGGRESIPFVDRNYYNYNQLPAVDLASTSYMPSTTDVYDPYINNNL.

The MADS-box domain occupies 1 to 59 (MKKVKLSLIANERSRKTSFMKRKNGIFKKLHELSTLCGVQACALIYSPFIPVPESWPSR). Residues 80-115 (KMMDQETHLMERITKAKEQLKNLAAENRELQVRRFM) are a coiled coil.

Interacts with AGL62.

It localises to the nucleus. In terms of biological role, probable transcription factor. This Arabidopsis thaliana (Mouse-ear cress) protein is Agamous-like MADS-box protein AGL90 (AGL90).